The chain runs to 653 residues: UvrABC system protein B (653 aa).

Residues 25-182 form the Helicase ATP-binding domain; sequence EGIERGVREQ…EKLVELQYKS (158 aa). 38-45 provides a ligand contact to ATP; sequence GVTGSGKT. The Beta-hairpin motif lies at 91 to 114; sequence YYDYYQPEAYIPHSDVYIEKDALI. Residues 429 to 591 form the Helicase C-terminal domain; sequence QIADVVNESQ…ITPKSISKSV (163 aa). In terms of domain architecture, UVR spans 616–651; it reads EEDIIKLQKEMLLHAENLEFEKALEIRNQINKLSQH.

The protein belongs to the UvrB family. In terms of assembly, forms a heterotetramer with UvrA during the search for lesions. Interacts with UvrC in an incision complex.

The protein resides in the cytoplasm. Its function is as follows. The UvrABC repair system catalyzes the recognition and processing of DNA lesions. A damage recognition complex composed of 2 UvrA and 2 UvrB subunits scans DNA for abnormalities. Upon binding of the UvrA(2)B(2) complex to a putative damaged site, the DNA wraps around one UvrB monomer. DNA wrap is dependent on ATP binding by UvrB and probably causes local melting of the DNA helix, facilitating insertion of UvrB beta-hairpin between the DNA strands. Then UvrB probes one DNA strand for the presence of a lesion. If a lesion is found the UvrA subunits dissociate and the UvrB-DNA preincision complex is formed. This complex is subsequently bound by UvrC and the second UvrB is released. If no lesion is found, the DNA wraps around the other UvrB subunit that will check the other stand for damage. In Anaplasma phagocytophilum (strain HZ), this protein is UvrABC system protein B.